A 193-amino-acid chain; its full sequence is Large ribosomal subunit protein uL11 (193 aa).

It belongs to the universal ribosomal protein uL11 family. As to quaternary structure, part of the ribosomal stalk of the 50S ribosomal subunit. Interacts with L10 and the large rRNA to form the base of the stalk. L10 forms an elongated spine to which L12 dimers bind in a sequential fashion forming a multimeric L10(L12)X complex. One or more lysine residues are methylated.

In terms of biological role, forms part of the ribosomal stalk which helps the ribosome interact with GTP-bound translation factors. This chain is Large ribosomal subunit protein uL11, found in Mycoplasmopsis synoviae (strain 53) (Mycoplasma synoviae).